We begin with the raw amino-acid sequence, 142 residues long: Lysosomal enzyme trafficking factor (142 aa).

2 helical membrane passes run 8–28 (MGWI…YYIF) and 76–96 (LLPF…VFLF).

This sequence belongs to the LYSET family.

Its subcellular location is the golgi apparatus membrane. Its function is as follows. Required for mannose-6-phosphate-dependent trafficking of lysosomal enzymes. LYSET bridges GlcNAc-1-phosphate transferase (GNPTAB), to the membrane-bound transcription factor site-1 protease (MBTPS1), thus allowing proteolytic activation of the GNPTAB. GNPTAB is involved in the regulation of M6P-dependent Golgi-to-lysosome trafficking of lysosomal enzymes. LYSET is thus an essential factor for maturation and delivery of lysosomal hydrolases. The chain is Lysosomal enzyme trafficking factor (tmem251) from Danio rerio (Zebrafish).